The chain runs to 316 residues: MGLSSSKDIDLLVNFIENRQGATLALPWPEDYRLTLHSVENIPDISREDVQNWAKTYMCCEGELVVVGVIHKAKTRTCRGPIVLQGARGHIYVYNGFFDRSLYHVASSFHDLFSNGLRFFYPIYETCDYALDSTVALDMIAHSKSFSELLHYRNERKNAFFTLKTYPYKTFVRFCNLSMTGFSSKHLIQWRRKLQTSLLDVVFIVQHNFFGDWRELVVVFDGHGMLFCVDREESLLFIARNMSDFLKIGCLRYNENRRLHTQWFTQDTDYIKQVDEMFSRDVLCPLREHCQRSRRDRGLLKICTSLVRGINCIERG.

This sequence belongs to the herpesviridae US22 family.

The polypeptide is Protein U25 (U25) (Human herpesvirus 6B (HHV-6 variant B)).